Reading from the N-terminus, the 258-residue chain is Ribosomal RNA small subunit methyltransferase J (258 aa).

Residues Arg-107–Asp-108, Glu-123–Arg-124, and Asp-177 contribute to the S-adenosyl-L-methionine site.

Belongs to the methyltransferase superfamily. RsmJ family.

The protein localises to the cytoplasm. It carries out the reaction guanosine(1516) in 16S rRNA + S-adenosyl-L-methionine = N(2)-methylguanosine(1516) in 16S rRNA + S-adenosyl-L-homocysteine + H(+). Functionally, specifically methylates the guanosine in position 1516 of 16S rRNA. This is Ribosomal RNA small subunit methyltransferase J from Stutzerimonas stutzeri (strain A1501) (Pseudomonas stutzeri).